A 469-amino-acid chain; its full sequence is 6-phospho-beta-galactosidase (469 aa).

Residues glutamine 18, histidine 115, asparagine 158, glutamate 159, and asparagine 296 each contribute to the D-galactose 6-phosphate site. The Proton donor role is filled by glutamate 159. Catalysis depends on glutamate 374, which acts as the Nucleophile. Positions 429, 430, 436, and 438 each coordinate D-galactose 6-phosphate.

Belongs to the glycosyl hydrolase 1 family.

The enzyme catalyses a 6-phospho-beta-D-galactoside + H2O = D-galactose 6-phosphate + an alcohol. Its pathway is carbohydrate metabolism; lactose degradation; D-galactose 6-phosphate and beta-D-glucose from lactose 6-phosphate: step 1/1. The polypeptide is 6-phospho-beta-galactosidase (Staphylococcus haemolyticus (strain JCSC1435)).